Consider the following 335-residue polypeptide: Cholinephosphotransferase 1 (335 aa).

A run of 2 helical transmembrane segments spans residues 53–73 (PNAITLGGLLLNCLTALPLIA) and 84–108 (FWAYILGALGLFIYQSLDAIDGKQA). Residue Asn-54 participates in CDP-choline binding. The Mg(2+) site is built by Asp-101 and Asp-104. Arg-109 serves as a coordination point for CDP-choline. The next 6 membrane-spanning stretches (helical) occupy residues 116–140 (PLGELFDHGCDSISTVFVVLGSCIA), 151–169 (FFCCFVGLFMFYSAHWQTY), 181–197 (VTEVQIAITMLLLVSAF), 213–238 (ELKFFAVVGILCGTAVSCFNYFRIIF), 267–276 (IGPGLLFLDQ), and 284–313 (EYVVLWIALFISLFDMLRYATGVCLQIAAH). Asp-122 is a Mg(2+) binding site. The active-site Proton acceptor is His-123. Residue Asp-126 participates in Mg(2+) binding.

The protein belongs to the CDP-alcohol phosphatidyltransferase class-I family. Mg(2+) serves as cofactor. It depends on Mn(2+) as a cofactor.

It is found in the golgi apparatus membrane. It catalyses the reaction CDP-choline + a 1,2-diacyl-sn-glycerol = a 1,2-diacyl-sn-glycero-3-phosphocholine + CMP + H(+). The enzyme catalyses 1-octadecanoyl-2-(5Z,8Z,11Z,14Z-eicosatetraenoyl)-sn-glycerol + CDP-choline = 1-octadecanoyl-2-(5Z,8Z,11Z,14Z-eicosatetraenoyl)-sn-glycero-3-phosphocholine + CMP + H(+). It carries out the reaction 1-hexadecanoyl-2-(9Z-octadecenoyl)-sn-glycerol + CDP-choline = 1-hexadecanoyl-2-(9Z-octadecenoyl)-sn-glycero-3-phosphocholine + CMP + H(+). The catalysed reaction is 1-hexadecanoyl-2-(4Z,7Z,10Z,13Z,16Z,19Z-docosahexaenoyl)-sn-glycerol + CDP-choline = 1-hexadecanoyl-2-(4Z,7Z,10Z,13Z,16Z,19Z-docosahexaenoyl)-sn-glycero-3-phosphocholine + CMP + H(+). It catalyses the reaction 1,2-dioctanoyl-sn-glycerol + CDP-choline = 1,2-dioctanoyl-sn-glycero-3-phosphocholine + CMP + H(+). The protein operates within phospholipid metabolism; phosphatidylcholine biosynthesis; phosphatidylcholine from phosphocholine: step 2/2. In terms of biological role, catalyzes the final step of de novo phosphatidylcholine (PC) synthesis, i.e. the transfer of choline phosphate from CDP-choline to the free hydroxyl of a diacylglycerol (DAG), producing a PC. It thereby plays a central role in the formation and maintenance of vesicular membranes. The sequence is that of Cholinephosphotransferase 1 (CHPT1) from Gallus gallus (Chicken).